A 469-amino-acid chain; its full sequence is Glutamine synthetase (469 aa).

Residues 16–100 (EGVQYVDLRF…MICDIYDPVT (85 aa)) enclose the GS beta-grasp domain. Positions 108–469 (TRYIAQKAEQ…PKEFELYWDI (362 aa)) constitute a GS catalytic domain. 2 residues coordinate Mg(2+): E133 and E135. E207 is an ATP binding site. The Mg(2+) site is built by E212 and E220. L-glutamate is bound by residues 264-265 (NG) and G265. H269 contributes to the Mg(2+) binding site. Residues 271-273 (HFS) and S273 contribute to the ATP site. Residues R321, E327, and R339 each contribute to the L-glutamate site. ATP is bound by residues R339, R344, and K353. Residue E358 participates in Mg(2+) binding. R360 contacts L-glutamate. Y398 carries the O-AMP-tyrosine modification.

This sequence belongs to the glutamine synthetase family. In terms of assembly, oligomer of 12 subunits arranged in the form of two hexagons. It depends on Mg(2+) as a cofactor.

The protein resides in the cytoplasm. The catalysed reaction is L-glutamate + NH4(+) + ATP = L-glutamine + ADP + phosphate + H(+). The activity of this enzyme could be controlled by adenylation under conditions of abundant glutamine. Its function is as follows. Catalyzes the ATP-dependent biosynthesis of glutamine from glutamate and ammonia. In Aquifex aeolicus (strain VF5), this protein is Glutamine synthetase.